Reading from the N-terminus, the 182-residue chain is Plasmolipin (182 aa).

The disordered stretch occupies residues 1 to 20 (MAEFPSKVNTRTSSPAQGGG). Residues 1-35 (MAEFPSKVNTRTSSPAQGGGAVVSTLSPDLGFVRS) are Cytoplasmic-facing. Residues 7-16 (KVNTRTSSPA) are compositionally biased toward polar residues. Residues 32–166 (FVRSSLGALM…SAFLSFQAWR (135 aa)) form the MARVEL domain. The chain crosses the membrane as a helical span at residues 36 to 56 (SLGALMLLQLVLGLLVWALIA). Topologically, residues 57-68 (DTPYHLYPSYGW) are extracellular. Residues 69–89 (VMFVAVFLWLVTIIFFVLYLF) form a helical membrane-spanning segment. At 90-99 (QLHMKLYMVP) the chain is on the cytoplasmic side. Residues 100-120 (WPLVLMVFNVGATVLYITAFI) form a helical membrane-spanning segment. Residues 121 to 141 (TCSASVELTSLKGSQPYNQRA) lie on the Extracellular side of the membrane. Residues 142-162 (AASFFSCLVMIAYGVSAFLSF) form a helical membrane-spanning segment. The Cytoplasmic segment spans residues 163 to 182 (QAWRGVGSNAATSQMAGGYA).

The protein belongs to the MAL family. Forms oligomers. Post-translationally, phosphorylated.

It is found in the cell membrane. The protein localises to the myelin membrane. It localises to the apical cell membrane. In terms of biological role, main component of the myelin sheath that plays an important role in myelin membrane biogenesis and myelination. Plays an essential function in apical endocytosis. Regulates epithelial development through the regulation of apical endocytosis. Part of the intracellular machinery that mediates basolateral-to-apical transport of ICAM-1, an essential adhesion receptor in epithelial cells, from the subapical compartment in hepatic epithelial cells. This chain is Plasmolipin (PLLP), found in Bos taurus (Bovine).